A 225-amino-acid chain; its full sequence is MTDNCREDDDNLGTSGDNALSAPTQLLVTPPAPHQTIVPPLNFCPVERYLYRSGQPSTVNFPFLLNLNLRTIIWLANEEPQDALLAFCDMHDIRLRFAAINPEGGEDDNPWDGLTEHSIVSALQTIVHRDNYPLLVCCGMGRHRTGTVIGCLRRIMGWNLASVSEEYRRFTGSRGGRILVELLIEAFDTKSVTIDKANAPEWLATAVSASEASYVPATTYSIHEM.

Positions 1-11 (MTDNCREDDDN) are enriched in acidic residues. Residues 1–24 (MTDNCREDDDNLGTSGDNALSAPT) are disordered. Residues 12–24 (LGTSGDNALSAPT) show a composition bias toward polar residues. A Tyrosine-protein phosphatase domain is found at 42–196 (NFCPVERYLY…FDTKSVTIDK (155 aa)). The active-site Phosphocysteine intermediate is the cysteine 138.

Belongs to the protein-tyrosine phosphatase family.

It is found in the cytoplasm. It catalyses the reaction O-phospho-L-tyrosyl-[protein] + H2O = L-tyrosyl-[protein] + phosphate. Putative tyrosine-protein phosphatase required for protection against superoxide stress. The polypeptide is Putative tyrosine-protein phosphatase OCA1 (OCA1) (Eremothecium gossypii (strain ATCC 10895 / CBS 109.51 / FGSC 9923 / NRRL Y-1056) (Yeast)).